We begin with the raw amino-acid sequence, 206 residues long: Thiamine-phosphate synthase (206 aa).

Residues 38 to 42 (QLRAK) and asparagine 70 contribute to the 4-amino-2-methyl-5-(diphosphooxymethyl)pyrimidine site. Positions 71 and 90 each coordinate Mg(2+). Serine 107 contacts 4-amino-2-methyl-5-(diphosphooxymethyl)pyrimidine. Residue 133 to 135 (TTT) coordinates 2-[(2R,5Z)-2-carboxy-4-methylthiazol-5(2H)-ylidene]ethyl phosphate. Lysine 136 lines the 4-amino-2-methyl-5-(diphosphooxymethyl)pyrimidine pocket. Residues glycine 164 and 184-185 (VS) contribute to the 2-[(2R,5Z)-2-carboxy-4-methylthiazol-5(2H)-ylidene]ethyl phosphate site.

It belongs to the thiamine-phosphate synthase family. The cofactor is Mg(2+).

The enzyme catalyses 2-[(2R,5Z)-2-carboxy-4-methylthiazol-5(2H)-ylidene]ethyl phosphate + 4-amino-2-methyl-5-(diphosphooxymethyl)pyrimidine + 2 H(+) = thiamine phosphate + CO2 + diphosphate. It catalyses the reaction 2-(2-carboxy-4-methylthiazol-5-yl)ethyl phosphate + 4-amino-2-methyl-5-(diphosphooxymethyl)pyrimidine + 2 H(+) = thiamine phosphate + CO2 + diphosphate. The catalysed reaction is 4-methyl-5-(2-phosphooxyethyl)-thiazole + 4-amino-2-methyl-5-(diphosphooxymethyl)pyrimidine + H(+) = thiamine phosphate + diphosphate. Its pathway is cofactor biosynthesis; thiamine diphosphate biosynthesis; thiamine phosphate from 4-amino-2-methyl-5-diphosphomethylpyrimidine and 4-methyl-5-(2-phosphoethyl)-thiazole: step 1/1. Condenses 4-methyl-5-(beta-hydroxyethyl)thiazole monophosphate (THZ-P) and 2-methyl-4-amino-5-hydroxymethyl pyrimidine pyrophosphate (HMP-PP) to form thiamine monophosphate (TMP). The protein is Thiamine-phosphate synthase of Herpetosiphon aurantiacus (strain ATCC 23779 / DSM 785 / 114-95).